We begin with the raw amino-acid sequence, 122 residues long: Basic phospholipase A2 F16 (122 aa).

Disulfide bonds link C26–C115, C28–C44, C43–C95, C49–C122, C50–C88, C57–C81, and C75–C86. Residues Y27, G29, and G31 each coordinate Ca(2+). H47 is an active-site residue. Ca(2+) is bound at residue D48. D89 is a catalytic residue.

It belongs to the phospholipase A2 family. Group II subfamily. D49 sub-subfamily. Requires Ca(2+) as cofactor. In terms of tissue distribution, expressed by the venom gland.

The protein resides in the secreted. It catalyses the reaction a 1,2-diacyl-sn-glycero-3-phosphocholine + H2O = a 1-acyl-sn-glycero-3-phosphocholine + a fatty acid + H(+). Its activity is regulated as follows. Pre-incubation with heparin markedly reduces the neurotoxicity of this toxin. Its function is as follows. Snake venom phospholipase A2 (PLA2) that produces neuromuscular blockade in chick biventer cervicis preparations in the absence and presence of crotapotin. In contrast, in mouse phrenic nerve-diaphragm preparations, the neuromuscular blockade is dependent on crotapotin. PLA2 catalyzes the calcium-dependent hydrolysis of the 2-acyl groups in 3-sn-phosphoglycerides. The protein is Basic phospholipase A2 F16 of Crotalus durissus terrificus (South American rattlesnake).